A 285-amino-acid polypeptide reads, in one-letter code: 2-oxoglutarate synthase subunit KorB (285 aa).

In terms of assembly, heterotetramer of the KorA, KorB, KorC and KorD subunits.

The catalysed reaction is 2 oxidized [2Fe-2S]-[ferredoxin] + 2-oxoglutarate + CoA = succinyl-CoA + 2 reduced [2Fe-2S]-[ferredoxin] + CO2 + H(+). In Methanothermobacter marburgensis (strain ATCC BAA-927 / DSM 2133 / JCM 14651 / NBRC 100331 / OCM 82 / Marburg) (Methanobacterium thermoautotrophicum), this protein is 2-oxoglutarate synthase subunit KorB (korB).